The chain runs to 491 residues: Subtilase-type proteinase RRT12 (491 aa).

A signal peptide spans 1–17 (MKPQCILISLLVNLAYA). Asn-38, Asn-64, Asn-106, and Asn-121 each carry an N-linked (GlcNAc...) asparagine glycan. Residues 142–442 (PFDVGDKDRY…FPRLNIEAIA (301 aa)) form the Peptidase S8 domain. Catalysis depends on charge relay system residues Asp-174 and His-205. Residues Asn-268 and Asn-356 are each glycosylated (N-linked (GlcNAc...) asparagine). Catalysis depends on Ser-365, which acts as the Charge relay system. N-linked (GlcNAc...) asparagine glycosylation is present at Asn-449.

The protein belongs to the peptidase S8 family. Post-translationally, N-glycosylated.

The protein resides in the spore wall. In terms of biological role, subtilisin-related protease involved in the formation of a protective dityrosine layer required for spore wall assembly. Identified in a screen for mutants with increased levels of rDNA transcription. In Saccharomyces cerevisiae (strain ATCC 204508 / S288c) (Baker's yeast), this protein is Subtilase-type proteinase RRT12 (RRT12).